A 213-amino-acid chain; its full sequence is NADH-quinone oxidoreductase subunit I (213 aa).

2 consecutive 4Fe-4S ferredoxin-type domains span residues 74–103 (RFIE…METS) and 113–142 (GNYS…HGTE). 8 residues coordinate [4Fe-4S] cluster: Cys83, Cys86, Cys89, Cys93, Cys122, Cys125, Cys128, and Cys132.

The protein belongs to the complex I 23 kDa subunit family. In terms of assembly, NDH-1 is composed of 14 different subunits. Subunits NuoA, H, J, K, L, M, N constitute the membrane sector of the complex. Requires [4Fe-4S] cluster as cofactor.

The protein resides in the cell inner membrane. It carries out the reaction a quinone + NADH + 5 H(+)(in) = a quinol + NAD(+) + 4 H(+)(out). NDH-1 shuttles electrons from NADH, via FMN and iron-sulfur (Fe-S) centers, to quinones in the respiratory chain. The immediate electron acceptor for the enzyme in this species is believed to be ubiquinone. Couples the redox reaction to proton translocation (for every two electrons transferred, four hydrogen ions are translocated across the cytoplasmic membrane), and thus conserves the redox energy in a proton gradient. This Campylobacter jejuni subsp. jejuni serotype O:6 (strain 81116 / NCTC 11828) protein is NADH-quinone oxidoreductase subunit I.